Consider the following 482-residue polypeptide: ATP synthase subunit beta (482 aa).

162-169 (GGAGVGKT) is an ATP binding site.

Belongs to the ATPase alpha/beta chains family. In terms of assembly, F-type ATPases have 2 components, CF(1) - the catalytic core - and CF(0) - the membrane proton channel. CF(1) has five subunits: alpha(3), beta(3), gamma(1), delta(1), epsilon(1). CF(0) has four main subunits: a(1), b(1), b'(1) and c(9-12).

The protein localises to the cellular thylakoid membrane. It catalyses the reaction ATP + H2O + 4 H(+)(in) = ADP + phosphate + 5 H(+)(out). Produces ATP from ADP in the presence of a proton gradient across the membrane. The catalytic sites are hosted primarily by the beta subunits. The protein is ATP synthase subunit beta of Trichormus variabilis (strain ATCC 29413 / PCC 7937) (Anabaena variabilis).